The primary structure comprises 458 residues: RuvB-like helicase 1 (458 aa).

71–78 contacts ATP; the sequence is GGPGTGKT.

Belongs to the RuvB family. May form heterododecamers with RVB2. Component of the SWR1 chromatin remodeling complex, the INO80 chromatin remodeling complex, and of the R2TP complex.

It localises to the nucleus. It carries out the reaction ATP + H2O = ADP + phosphate + H(+). DNA helicase which participates in several chromatin remodeling complexes, including the SWR1 and the INO80 complexes. The SWR1 complex mediates the ATP-dependent exchange of histone H2A for the H2A variant HZT1 leading to transcriptional regulation of selected genes by chromatin remodeling. The INO80 complex remodels chromatin by shifting nucleosomes and is involved in DNA repair. Also involved in pre-rRNA processing. In Gibberella zeae (strain ATCC MYA-4620 / CBS 123657 / FGSC 9075 / NRRL 31084 / PH-1) (Wheat head blight fungus), this protein is RuvB-like helicase 1 (RVB1).